The chain runs to 618 residues: Chaperone protein HtpG (618 aa).

The interval 1–340 (MATKHQFQTE…SEDLPLNVSR (340 aa)) is a; substrate-binding. Residues 341-545 (EILQQNKILA…KEDNNPMMAN (205 aa)) form a b region. Residues 546 to 618 (LMAQMGQKVP…ELNSLLLQSL (73 aa)) form a c region.

It belongs to the heat shock protein 90 family. As to quaternary structure, homodimer.

The protein resides in the cytoplasm. Functionally, molecular chaperone. Has ATPase activity. This is Chaperone protein HtpG from Helicobacter hepaticus (strain ATCC 51449 / 3B1).